The following is a 364-amino-acid chain: Dihydroorotase (364 aa).

The Zn(2+) site is built by histidine 14, histidine 16, lysine 98, histidine 137, histidine 180, and aspartate 258. Lysine 98 is modified (N6-carboxylysine).

The protein belongs to the metallo-dependent hydrolases superfamily. DHOase family. Class II DHOase subfamily. Zn(2+) serves as cofactor.

It carries out the reaction (S)-dihydroorotate + H2O = N-carbamoyl-L-aspartate + H(+). Its pathway is pyrimidine metabolism; UMP biosynthesis via de novo pathway; (S)-dihydroorotate from bicarbonate: step 3/3. Functionally, catalyzes the conversion of ureidosuccinic acid (USA) to dihydroorotate, the third step of the de novo pyrimidine biosynthetic pathway. The polypeptide is Dihydroorotase (URA4) (Saccharomyces cerevisiae (strain ATCC 204508 / S288c) (Baker's yeast)).